A 427-amino-acid chain; its full sequence is Adenylosuccinate synthetase (427 aa).

GTP contacts are provided by residues 12-18 (GDEGKGK) and 40-42 (GHT). Catalysis depends on Asp13, which acts as the Proton acceptor. 2 residues coordinate Mg(2+): Asp13 and Gly40. Residues 13-16 (DEGK), 38-41 (NAGH), Thr128, Arg142, Gln223, Thr238, and Arg302 each bind IMP. The Proton donor role is filled by His41. A substrate-binding site is contributed by 298–304 (VTTGRAR). Residues Arg304, 330–332 (KLD), and 412–414 (GVG) each bind GTP.

It belongs to the adenylosuccinate synthetase family. As to quaternary structure, homodimer. Mg(2+) serves as cofactor.

It is found in the cytoplasm. It catalyses the reaction IMP + L-aspartate + GTP = N(6)-(1,2-dicarboxyethyl)-AMP + GDP + phosphate + 2 H(+). It participates in purine metabolism; AMP biosynthesis via de novo pathway; AMP from IMP: step 1/2. Functionally, plays an important role in the de novo pathway of purine nucleotide biosynthesis. Catalyzes the first committed step in the biosynthesis of AMP from IMP. The sequence is that of Adenylosuccinate synthetase from Parafrankia sp. (strain EAN1pec).